The chain runs to 439 residues: Xaa-Pro dipeptidase (439 aa).

Mn(2+)-binding residues include Asp-244, Asp-255, His-335, Glu-380, and Glu-419.

It belongs to the peptidase M24B family. Bacterial-type prolidase subfamily. Mn(2+) is required as a cofactor.

It carries out the reaction Xaa-L-Pro dipeptide + H2O = an L-alpha-amino acid + L-proline. Functionally, splits dipeptides with a prolyl residue in the C-terminal position. The protein is Xaa-Pro dipeptidase of Shewanella sp. (strain MR-4).